Reading from the N-terminus, the 341-residue chain is Ribosomal RNA small subunit methyltransferase C (341 aa).

Belongs to the methyltransferase superfamily. RsmC family. In terms of assembly, monomer.

It localises to the cytoplasm. The enzyme catalyses guanosine(1207) in 16S rRNA + S-adenosyl-L-methionine = N(2)-methylguanosine(1207) in 16S rRNA + S-adenosyl-L-homocysteine + H(+). Its function is as follows. Specifically methylates the guanine in position 1207 of 16S rRNA in the 30S particle. This is Ribosomal RNA small subunit methyltransferase C from Shewanella amazonensis (strain ATCC BAA-1098 / SB2B).